Here is a 447-residue protein sequence, read N- to C-terminus: Serine/threonine-protein phosphatase 2A 55 kDa regulatory subunit B delta isoform (447 aa).

WD repeat units follow at residues 26-65, 91-132, 175-213, 224-264, 283-321, 338-379, and 414-447; these read AEADIISTVEFNYSGELLATGDKGGRVVIFQREQESKNRP, EIEE…KRAE, AHTYHINSISVNSDYETYLSADDLRINLWHLEITDRSFN, ELTE…LCDR, EIISSISDVKFSHSGRYMMTRDYLSVKVWDLNMENRPVE, ENDC…DITL, and DFNKKILHTAWHPKENVIAVAATNNLYIFQDKMN.

Belongs to the phosphatase 2A regulatory subunit B family. PP2A consists of a common heterodimeric core enzyme, composed of a 36 kDa catalytic subunit (subunit C) and a 65 kDa constant regulatory subunit (PR65 or subunit A), that associates with a variety of regulatory subunits.

The protein localises to the cytoplasm. Functionally, substrate-recognition subunit of protein phosphatase 2A (PP2A) that plays a key role in cell cycle by controlling mitosis entry and exit. The activity of PP2A complexes containing PPP2R2D (PR55-delta) fluctuate during the cell cycle: the activity is high in interphase and low in mitosis. The protein is Serine/threonine-protein phosphatase 2A 55 kDa regulatory subunit B delta isoform (ppp2r2d) of Danio rerio (Zebrafish).